The following is a 152-amino-acid chain: Ribosome maturation factor RimP (152 aa).

This sequence belongs to the RimP family.

It is found in the cytoplasm. In terms of biological role, required for maturation of 30S ribosomal subunits. This chain is Ribosome maturation factor RimP, found in Rubrobacter xylanophilus (strain DSM 9941 / JCM 11954 / NBRC 16129 / PRD-1).